Consider the following 274-residue polypeptide: Putative phosphoenolpyruvate synthase regulatory protein (274 aa).

154 to 161 (AVSRSGKT) contributes to the ADP binding site.

This sequence belongs to the pyruvate, phosphate/water dikinase regulatory protein family. PSRP subfamily.

It catalyses the reaction [pyruvate, water dikinase] + ADP = [pyruvate, water dikinase]-phosphate + AMP + H(+). The catalysed reaction is [pyruvate, water dikinase]-phosphate + phosphate + H(+) = [pyruvate, water dikinase] + diphosphate. Its function is as follows. Bifunctional serine/threonine kinase and phosphorylase involved in the regulation of the phosphoenolpyruvate synthase (PEPS) by catalyzing its phosphorylation/dephosphorylation. This is Putative phosphoenolpyruvate synthase regulatory protein from Alkalilimnicola ehrlichii (strain ATCC BAA-1101 / DSM 17681 / MLHE-1).